We begin with the raw amino-acid sequence, 442 residues long: GTPase Der (442 aa).

2 consecutive EngA-type G domains span residues 2-167 (RTIA…PIQN) and 175-351 (FKFC…EQAM). GTP is bound by residues 8–15 (GKPNVGKS), 55–59 (DTGGI), 119–122 (NKIE), 181–188 (GRPNVGKS), 228–232 (DTAGI), and 293–296 (NKWD). Residues 352 to 436 (RKIATSLLND…PITLYWQDKN (85 aa)) form the KH-like domain.

It belongs to the TRAFAC class TrmE-Era-EngA-EngB-Septin-like GTPase superfamily. EngA (Der) GTPase family. Associates with the 50S ribosomal subunit.

GTPase that plays an essential role in the late steps of ribosome biogenesis. The protein is GTPase Der of Ureaplasma parvum serovar 3 (strain ATCC 27815 / 27 / NCTC 11736).